A 233-amino-acid polypeptide reads, in one-letter code: Antiholin-like protein LrgB (233 aa).

The next 6 helical transmembrane spans lie at 5-25 (LGIN…VIAT), 33-53 (GFFL…FLKL), 63-83 (IGGD…AIPL), 97-117 (IFGG…LVAI), 152-172 (LTSL…AKIV), and 212-232 (IAVV…APIL).

This sequence belongs to the CidB/LrgB family. LrgB subfamily.

Its subcellular location is the cell membrane. Its function is as follows. Inhibits the expression or activity of extracellular murein hydrolases by interacting, possibly with LrgA, with the holin-like proteins CidA and/or CidB. The LrgAB and CidAB proteins may affect the proton motive force of the membrane. May be involved in programmed cell death (PCD), possibly triggering PCD in response to antibiotics and environmental stresses. This is Antiholin-like protein LrgB from Staphylococcus epidermidis (strain ATCC 12228 / FDA PCI 1200).